The chain runs to 249 residues: UDP-2,3-diacylglucosamine hydrolase (249 aa).

Asp-7, His-9, Asp-40, Asn-78, and His-113 together coordinate Mn(2+). Substrate is bound at residue 78-79 (NR). 5 residues coordinate substrate: Asp-121, Ser-159, Thr-163, Lys-166, and His-194. The Mn(2+) site is built by His-194 and His-196.

It belongs to the LpxH family. Requires Mn(2+) as cofactor.

Its subcellular location is the cell inner membrane. The catalysed reaction is UDP-2-N,3-O-bis[(3R)-3-hydroxytetradecanoyl]-alpha-D-glucosamine + H2O = 2-N,3-O-bis[(3R)-3-hydroxytetradecanoyl]-alpha-D-glucosaminyl 1-phosphate + UMP + 2 H(+). The protein operates within glycolipid biosynthesis; lipid IV(A) biosynthesis; lipid IV(A) from (3R)-3-hydroxytetradecanoyl-[acyl-carrier-protein] and UDP-N-acetyl-alpha-D-glucosamine: step 4/6. Hydrolyzes the pyrophosphate bond of UDP-2,3-diacylglucosamine to yield 2,3-diacylglucosamine 1-phosphate (lipid X) and UMP by catalyzing the attack of water at the alpha-P atom. Involved in the biosynthesis of lipid A, a phosphorylated glycolipid that anchors the lipopolysaccharide to the outer membrane of the cell. In Pseudomonas fluorescens (strain SBW25), this protein is UDP-2,3-diacylglucosamine hydrolase.